An 88-amino-acid polypeptide reads, in one-letter code: Small ribosomal subunit protein uS15 (88 aa).

It belongs to the universal ribosomal protein uS15 family. Part of the 30S ribosomal subunit. Forms a bridge to the 50S subunit in the 70S ribosome, contacting the 23S rRNA.

Its function is as follows. One of the primary rRNA binding proteins, it binds directly to 16S rRNA where it helps nucleate assembly of the platform of the 30S subunit by binding and bridging several RNA helices of the 16S rRNA. Forms an intersubunit bridge (bridge B4) with the 23S rRNA of the 50S subunit in the ribosome. This chain is Small ribosomal subunit protein uS15, found in Borreliella afzelii (strain PKo) (Borrelia afzelii).